The chain runs to 404 residues: Cytoplasmic tRNA 2-thiolation protein 2 (404 aa).

This sequence belongs to the CTU2/NCS2 family.

The protein localises to the cytoplasm. Its pathway is tRNA modification; 5-methoxycarbonylmethyl-2-thiouridine-tRNA biosynthesis. In terms of biological role, plays a central role in 2-thiolation of mcm(5)S(2)U at tRNA wobble positions of tRNA(Lys), tRNA(Glu) and tRNA(Gln). May act by forming a heterodimer with NCS6/CTU1 that ligates sulfur from thiocarboxylated URM1 onto the uridine of tRNAs at wobble position. This Drosophila erecta (Fruit fly) protein is Cytoplasmic tRNA 2-thiolation protein 2.